We begin with the raw amino-acid sequence, 160 residues long: SsrA-binding protein (160 aa).

The segment at 133 to 160 (KKEHDKREDLKEREWQRDKERMMKNKGR) is disordered.

Belongs to the SmpB family.

The protein resides in the cytoplasm. Required for rescue of stalled ribosomes mediated by trans-translation. Binds to transfer-messenger RNA (tmRNA), required for stable association of tmRNA with ribosomes. tmRNA and SmpB together mimic tRNA shape, replacing the anticodon stem-loop with SmpB. tmRNA is encoded by the ssrA gene; the 2 termini fold to resemble tRNA(Ala) and it encodes a 'tag peptide', a short internal open reading frame. During trans-translation Ala-aminoacylated tmRNA acts like a tRNA, entering the A-site of stalled ribosomes, displacing the stalled mRNA. The ribosome then switches to translate the ORF on the tmRNA; the nascent peptide is terminated with the 'tag peptide' encoded by the tmRNA and targeted for degradation. The ribosome is freed to recommence translation, which seems to be the essential function of trans-translation. This is SsrA-binding protein from Tolumonas auensis (strain DSM 9187 / NBRC 110442 / TA 4).